The following is a 158-amino-acid chain: UPF0336 protein Mb0654 (158 aa).

Belongs to the UPF0336 family.

The chain is UPF0336 protein Mb0654 from Mycobacterium bovis (strain ATCC BAA-935 / AF2122/97).